The chain runs to 560 residues: Eukaryotic translation initiation factor 3 subunit D-1 (560 aa).

The tract at residues 98–166 (VQKPPHQRGR…RGPPPKMRES (69 aa)) is disordered. The span at 100–121 (KPPHQRGRFRNMRNSRSGRGRN) shows a compositional bias: basic residues. The residue at position 128 (Thr128) is a Phosphothreonine. Residues 147–156 (GRGMGKKFGH) are compositionally biased toward basic residues. The interval 291–305 (EFDLLTVNESSVEPP) is RNA gate.

Belongs to the eIF-3 subunit D family. In terms of assembly, component of the eukaryotic translation initiation factor 3 (eIF-3) complex. The eIF-3 complex interacts with pix.

It localises to the cytoplasm. In terms of biological role, mRNA cap-binding component of the eukaryotic translation initiation factor 3 (eIF-3) complex, which is involved in protein synthesis of a specialized repertoire of mRNAs and, together with other initiation factors, stimulates binding of mRNA and methionyl-tRNAi to the 40S ribosome. The eIF-3 complex specifically targets and initiates translation of a subset of mRNAs involved in cell proliferation. In the eIF-3 complex, eif3d specifically recognizes and binds the 7-methylguanosine cap of a subset of mRNAs. This is Eukaryotic translation initiation factor 3 subunit D-1 from Drosophila melanogaster (Fruit fly).